Consider the following 425-residue polypeptide: Cysteate synthase (425 aa).

Position 106 is an N6-(pyridoxal phosphate)lysine (Lys-106). Pyridoxal 5'-phosphate contacts are provided by Asn-132 and Thr-382.

Belongs to the threonine synthase family. Cysteate synthase subfamily. Homotrimer. The cofactor is pyridoxal 5'-phosphate.

The enzyme catalyses O-phospho-L-serine + sulfite + H(+) = L-cysteate + phosphate. It functions in the pathway cofactor biosynthesis; coenzyme M biosynthesis. Its function is as follows. Specifically catalyzes the beta-elimination of phosphate from L-phosphoserine and the beta-addition of sulfite to the dehydroalanine intermediate to produce L-cysteate. The protein is Cysteate synthase of Methanosphaerula palustris (strain ATCC BAA-1556 / DSM 19958 / E1-9c).